The chain runs to 104 residues: SOSS complex subunit C (104 aa).

N-acetylalanine is present on alanine 2. Residue serine 50 is modified to Phosphoserine.

The protein belongs to the SOSS-C family. Component of the SOSS complex, composed of SOSS-B (SOSS-B1/NABP2 or SOSS-B2/NABP1), SOSS-A/INTS3 and SOSS-C/INIP. SOSS complexes containing SOSS-B1/NABP2 are more abundant than complexes containing SOSS-B2/NABP1. Interacts with INTS3; the interaction is direct.

It localises to the nucleus. Functionally, component of the SOSS complex, a multiprotein complex that functions downstream of the MRN complex to promote DNA repair and G2/M checkpoint. The SOSS complex associates with single-stranded DNA at DNA lesions and influences diverse endpoints in the cellular DNA damage response including cell-cycle checkpoint activation, recombinational repair and maintenance of genomic stability. Required for efficient homologous recombination-dependent repair of double-strand breaks (DSBs) and ATM-dependent signaling pathways. This chain is SOSS complex subunit C (INIP), found in Homo sapiens (Human).